The chain runs to 1254 residues: Protein transport protein Sec31A (1254 aa).

WD repeat units lie at residues 4-47 (KEIN…EIFE), 64-111 (SSPH…AGDS), 120-160 (KHTG…SPMT), 166-206 (QPQE…LIIK), 209-254 (DHSN…SPLK), 258-298 (NHTR…VLYE), and 301-341 (TSTQ…NDNA). The segment covering 364-383 (TLPPLQLPQQTSPQSTITPL) has biased composition (low complexity). Residues 364 to 386 (TLPPLQLPQQTSPQSTITPLKKP) are disordered. The WD 8; interaction with SEC13 repeat unit spans residues 397 to 428 (SFAFGGKLVTLDNIKPTAQQPQQTAAHVVHIS). Disordered regions lie at residues 818–892 (PMQT…QSPA), 983–1008 (CFQH…GTQH), and 1058–1125 (PPAP…PGAP). Residues 832–846 (AQPAAPAVPPQYYQQ) are compositionally biased toward low complexity. 2 stretches are compositionally biased toward polar residues: residues 847 to 863 (GRSA…TPTA) and 872 to 881 (VPSSDPQGDS). A compositionally biased stretch (low complexity) spans 1080 to 1091 (QTLQPQQQVPDQ).

It belongs to the WD repeat SEC31 family. As to quaternary structure, COPII is composed of at least 5 proteins: the SEC23/24 complex, the SEC13/31 complex and SAR1. SEC13 and SEC31 make a 2:2 tetramer that forms the edge element of the COPII outer coat. The tetramer self-assembles in multiple copies to form the complete polyhedral cage. Interacts (via WD 8) with SEC13.

It is found in the cytoplasm. Its subcellular location is the cytoplasmic vesicle. It localises to the COPII-coated vesicle membrane. The protein resides in the endoplasmic reticulum membrane. Component of the coat protein complex II (COPII) which promotes the formation of transport vesicles from the endoplasmic reticulum (ER). The coat has two main functions, the physical deformation of the endoplasmic reticulum membrane into vesicles and the selection of cargo molecules. The protein is Protein transport protein Sec31A (sec31a) of Danio rerio (Zebrafish).